The primary structure comprises 476 residues: Adenosylhomocysteinase (476 aa).

Substrate is bound by residues T67, D142, and E202. Position 203 to 205 (T203 to T205) interacts with NAD(+). The substrate site is built by K232 and D236. Residues N237, G266–G271, E289, N324, I345–H347, and N390 contribute to the NAD(+) site.

Belongs to the adenosylhomocysteinase family. NAD(+) is required as a cofactor.

It localises to the cytoplasm. The enzyme catalyses S-adenosyl-L-homocysteine + H2O = L-homocysteine + adenosine. It participates in amino-acid biosynthesis; L-homocysteine biosynthesis; L-homocysteine from S-adenosyl-L-homocysteine: step 1/1. Its function is as follows. May play a key role in the regulation of the intracellular concentration of adenosylhomocysteine. The chain is Adenosylhomocysteinase from Synechococcus sp. (strain CC9902).